The chain runs to 427 residues: Forkhead box protein A1-B (427 aa).

Positions 157–251 (KPPYSYISLI…ENGCYLRRQK (95 aa)) form a DNA-binding region, fork-head. Residues 256 to 272 (EKTQGGKGNQDGRKDHS) show a composition bias toward basic and acidic residues. The interval 256-336 (EKTQGGKGNQ…HQNHSTHSLA (81 aa)) is disordered. Low complexity predominate over residues 285 to 302 (SSQMDSSSSMSNPSSSPQ). Positions 323-334 (PLSSHQNHSTHS) are enriched in polar residues.

Present in the vegetal pole and marginal zone but not the animal pole of gastrulae and in equal levels in the dorsal and ventral halves of both gastrulae and neurulae. At neurula stage, expressed in the notochord. During tailbud stages, expressed in the foregut, brain, hypocord, neural floor plate and in two lines of cells just dorsal and ventral to the notochord. Expressed in the adult liver.

Its subcellular location is the nucleus. Its function is as follows. Probable transcription factor. The sequence is that of Forkhead box protein A1-B (foxa1-b) from Xenopus laevis (African clawed frog).